A 123-amino-acid polypeptide reads, in one-letter code: UPF0102 protein Csal_2201 (123 aa).

It belongs to the UPF0102 family.

The sequence is that of UPF0102 protein Csal_2201 from Chromohalobacter salexigens (strain ATCC BAA-138 / DSM 3043 / CIP 106854 / NCIMB 13768 / 1H11).